Here is a 392-residue protein sequence, read N- to C-terminus: Phospho-N-acetylmuramoyl-pentapeptide-transferase (392 aa).

The next 10 membrane-spanning stretches (helical) occupy residues 28–48 (RALM…PFVI), 76–96 (TMGG…WFDL), 100–120 (FVWI…VDDW), 137–157 (YLWQ…SISE), 193–213 (ISYP…IVGS), 225–245 (GLAI…AYVT), 262–282 (SGEL…FLWF), 289–309 (VFMG…IAVI), 314–334 (IVLA…MLQV), and 369–389 (QVVV…LSTL).

This sequence belongs to the glycosyltransferase 4 family. MraY subfamily. It depends on Mg(2+) as a cofactor.

It localises to the cell inner membrane. The catalysed reaction is UDP-N-acetyl-alpha-D-muramoyl-L-alanyl-gamma-D-glutamyl-meso-2,6-diaminopimeloyl-D-alanyl-D-alanine + di-trans,octa-cis-undecaprenyl phosphate = di-trans,octa-cis-undecaprenyl diphospho-N-acetyl-alpha-D-muramoyl-L-alanyl-D-glutamyl-meso-2,6-diaminopimeloyl-D-alanyl-D-alanine + UMP. Its pathway is cell wall biogenesis; peptidoglycan biosynthesis. Its function is as follows. Catalyzes the initial step of the lipid cycle reactions in the biosynthesis of the cell wall peptidoglycan: transfers peptidoglycan precursor phospho-MurNAc-pentapeptide from UDP-MurNAc-pentapeptide onto the lipid carrier undecaprenyl phosphate, yielding undecaprenyl-pyrophosphoryl-MurNAc-pentapeptide, known as lipid I. The sequence is that of Phospho-N-acetylmuramoyl-pentapeptide-transferase from Polaromonas naphthalenivorans (strain CJ2).